We begin with the raw amino-acid sequence, 633 residues long: Membrane protein insertase YidC (633 aa).

6 helical membrane passes run 3–23, 377–397, 453–473, 499–519, 541–561, and 562–582; these read KNTL…SWFN, FIHN…IILF, LPML…PSAI, IPII…LMTI, GMKA…NQYA, and SGLT…TLIF. Residues 612-633 form a disordered region; that stretch reads LEEAQRAQQETLRKQQEAKKKR.

The protein belongs to the OXA1/ALB3/YidC family. Type 1 subfamily. As to quaternary structure, interacts with the Sec translocase complex via SecD. Specifically interacts with transmembrane segments of nascent integral membrane proteins during membrane integration.

It is found in the cell inner membrane. Functionally, required for the insertion and/or proper folding and/or complex formation of integral membrane proteins into the membrane. Involved in integration of membrane proteins that insert both dependently and independently of the Sec translocase complex, as well as at least some lipoproteins. Aids folding of multispanning membrane proteins. This is Membrane protein insertase YidC from Parabacteroides distasonis (strain ATCC 8503 / DSM 20701 / CIP 104284 / JCM 5825 / NCTC 11152).